The following is a 436-amino-acid chain: Ribosome biogenesis protein WDR12 homolog (436 aa).

Residues 13-97 (VRVRFLTKLP…ERVLELEYVK (85 aa)) form a ubiquitin-like (UBL) domain region. 7 WD repeats span residues 109–147 (PHDDWVSAVDGSNPSFVLTGCYDGLARIWRDASECTHIL), 149–193 (GHSD…SVPK), 203–242 (GHTSSVQSVAVDPSTNMICSGSWDNSIKLWSVEGSEEDGD), 273–311 (GHTQCVSAVTWPERQTIYSASWDHSVRQWDVQTGKETWN), 313–353 (VSGK…TLAP), 359–399 (SHKS…PLAS), and 402–436 (SHKDKVLCADWWKGDSVISGGADSKLCIASGIEIV). The disordered stretch occupies residues 240–262 (DGDTVSVKKRRTNSDSSGPEESL).

The protein belongs to the WD repeat WDR12/YTM1 family.

The protein resides in the nucleus. The protein localises to the nucleolus. It localises to the nucleoplasm. Its function is as follows. Required for maturation of ribosomal RNAs and formation of the large ribosomal subunit. The chain is Ribosome biogenesis protein WDR12 homolog from Oryza sativa subsp. japonica (Rice).